Here is a 404-residue protein sequence, read N- to C-terminus: Retrotransposable element SLACS 45 kDa protein (404 aa).

Composition is skewed to polar residues over residues 1–11 (MVRNLRSSEPQ) and 29–41 (PALN…QKQV). Disordered stretches follow at residues 1–62 (MVRN…NTSI), 86–111 (KKAA…GRPP), 134–251 (LGKG…KKGA), 317–341 (CRQQ…GAVS), and 369–404 (PKLP…AGPP). Residues 98–111 (VNKEGNRKKYGRPP) show a composition bias toward basic and acidic residues. Positions 141 to 151 (TAHTKSNQSRV) are enriched in polar residues. A C2H2-type zinc finger spans residues 300–321 (CPVCGFAHPEETITVTHCRQQH). Basic and acidic residues predominate over residues 395 to 404 (HHCDRSAGPP).

The polypeptide is Retrotransposable element SLACS 45 kDa protein (Trypanosoma brucei gambiense).